The sequence spans 391 residues: Salivary protein TRIO (391 aa).

Positions 1–24 are cleaved as a signal peptide; the sequence is MCRGLSAVLILLVSLSAQLHVVVG. N-linked (GlcNAc...) asparagine glycosylation occurs at Asn-323.

As to expression, female salivary gland (at protein level). Female saliva (at protein level). Not detected in female midgut, head and carcass (at protein level). Not detected in male tissues (at protein level).

The protein localises to the secreted. Required for efficient probing on a mammalian host. Alters the local inflammatory response in the host skin following a mosquito bite by suppressing TNF-alpha/TNF expression. Its function is as follows. (Microbial infection) Contributes to optimal transmission of Plasmodium berghei sporozoites to mice. Functionally, (Microbial infection) Contributes to optimal transmission of Plasmodium falciparum sporozoites to mammalian host. This Anopheles gambiae (African malaria mosquito) protein is Salivary protein TRIO.